Here is a 273-residue protein sequence, read N- to C-terminus: GATA-type zinc finger protein 1 (273 aa).

Disordered stretches follow at residues 99-143 (RDSK…ERVD) and 172-201 (SSRS…AGSE). The segment at 208–232 (CASCRTQRTPLWRDAEDGTPLCNAC) adopts a GATA-type zinc-finger fold.

Its subcellular location is the nucleus. In terms of biological role, transcriptional regulator that plays a key role in germ cell development. Determines the oogenic fate by activating key genes for the oogenic program and meiotic prophase entry. Acts downstream of bone morphogenetic protein (BMP) by regulating expression of genes required for the oogenic programs, which are repressed by Polycomb activities in sexually uncommitted germ cells. Regulates expression of STRA8, a central downstream effector for the meiotic program. Acts independently of retinoic acid (RA). In males, not required for germ-cell sex determination, but required to allow the spermatogonia to efficiently accomplish the meiotic prophase. This Homo sapiens (Human) protein is GATA-type zinc finger protein 1.